Reading from the N-terminus, the 175-residue chain is Isopentenyl-diphosphate Delta-isomerase (175 aa).

Mn(2+) is bound by residues His22 and His29. A Nudix hydrolase domain is found at 27-160 (KLHRAFSVLL…PAAYTPWLAE (134 aa)). Cys64 is an active-site residue. Cys64 serves as a coordination point for Mg(2+). His66 contacts Mn(2+). Glu84 contributes to the Mg(2+) binding site. Mn(2+) contacts are provided by Glu110 and Glu112. Glu112 is a catalytic residue.

Belongs to the IPP isomerase type 1 family. Mg(2+) serves as cofactor. It depends on Mn(2+) as a cofactor.

The protein resides in the cytoplasm. The catalysed reaction is isopentenyl diphosphate = dimethylallyl diphosphate. It functions in the pathway isoprenoid biosynthesis; dimethylallyl diphosphate biosynthesis; dimethylallyl diphosphate from isopentenyl diphosphate: step 1/1. Its function is as follows. Catalyzes the 1,3-allylic rearrangement of the homoallylic substrate isopentenyl (IPP) to its highly electrophilic allylic isomer, dimethylallyl diphosphate (DMAPP). In Nocardia farcinica (strain IFM 10152), this protein is Isopentenyl-diphosphate Delta-isomerase.